Reading from the N-terminus, the 302-residue chain is tRNA dimethylallyltransferase (302 aa).

9–16 (GATATGKS) contributes to the ATP binding site. 11–16 (TATGKS) is a binding site for substrate. Residues 34–37 (DSRQ) form an interaction with substrate tRNA region.

It belongs to the IPP transferase family. Monomer. Mg(2+) serves as cofactor.

It carries out the reaction adenosine(37) in tRNA + dimethylallyl diphosphate = N(6)-dimethylallyladenosine(37) in tRNA + diphosphate. Catalyzes the transfer of a dimethylallyl group onto the adenine at position 37 in tRNAs that read codons beginning with uridine, leading to the formation of N6-(dimethylallyl)adenosine (i(6)A). The chain is tRNA dimethylallyltransferase from Nostoc punctiforme (strain ATCC 29133 / PCC 73102).